The sequence spans 471 residues: Probable ribonuclease FAU-1 (471 aa).

Belongs to the FAU-1 family.

In terms of biological role, probable RNase involved in rRNA stability through maturation and/or degradation of precursor rRNAs. Binds to RNA in loop regions with AU-rich sequences. The polypeptide is Probable ribonuclease FAU-1 (Thermococcus gammatolerans (strain DSM 15229 / JCM 11827 / EJ3)).